A 601-amino-acid chain; its full sequence is HMG domain-containing protein 4 (601 aa).

A Glycyl lysine isopeptide (Lys-Gly) (interchain with G-Cter in SUMO2) cross-link involves residue lysine 8. Disordered regions lie at residues 51–410 (VRNS…KKKN) and 473–514 (TTVK…ASPA). Positions 82-93 (DYYYGDISSLES) are enriched in low complexity. Serine 102 carries the post-translational modification Phosphoserine. A Glycyl lysine isopeptide (Lys-Gly) (interchain with G-Cter in SUMO2) cross-link involves residue lysine 191. Position 197 is a phosphoserine (serine 197). Composition is skewed to polar residues over residues 212–221 (QYPSQQATVK) and 270–282 (DASQFAESHSANL). Residues 316–344 (IKKKKKSKKSKKKKDKEKHKEKRHSKSKR) are compositionally biased toward basic residues. Positions 394–404 (EEKDKERERGE) are enriched in basic and acidic residues. A DNA-binding region (HMG box) is located at residues 407–475 (KKKNMSAYQV…KQNKAEATTV (69 aa)). Serine 497, serine 502, and serine 512 each carry phosphoserine.

The protein localises to the nucleus. Negatively regulates Wnt/beta-catenin signaling during development. The sequence is that of HMG domain-containing protein 4 (HMGXB4) from Homo sapiens (Human).